The sequence spans 100 residues: Large ribosomal subunit protein uL23 (100 aa).

The protein belongs to the universal ribosomal protein uL23 family. Part of the 50S ribosomal subunit. Contacts protein L29, and trigger factor when it is bound to the ribosome.

Functionally, one of the early assembly proteins it binds 23S rRNA. One of the proteins that surrounds the polypeptide exit tunnel on the outside of the ribosome. Forms the main docking site for trigger factor binding to the ribosome. The sequence is that of Large ribosomal subunit protein uL23 from Shewanella halifaxensis (strain HAW-EB4).